Consider the following 79-residue polypeptide: Small ribosomal subunit protein bS18 (79 aa).

It belongs to the bacterial ribosomal protein bS18 family. In terms of assembly, part of the 30S ribosomal subunit. Forms a tight heterodimer with protein bS6.

Its function is as follows. Binds as a heterodimer with protein bS6 to the central domain of the 16S rRNA, where it helps stabilize the platform of the 30S subunit. In Bacillus subtilis (strain 168), this protein is Small ribosomal subunit protein bS18 (rpsR).